Reading from the N-terminus, the 236-residue chain is Eukaryotic translation initiation factor 3 subunit J (236 aa).

A disordered region spans residues 1 to 65; the sequence is MADDWESAAD…APAKPKPNKA (65 aa). The segment covering 28 to 46 has biased composition (acidic residues); the sequence is GEDEDEDIKDSWEDEEEKK. A compositionally biased stretch (basic and acidic residues) spans 47-58; it reads DEEKPTKTEAPA.

The protein belongs to the eIF-3 subunit J family. As to quaternary structure, component of the eukaryotic translation initiation factor 3 (eIF-3) complex. The eIF-3 complex interacts with pix.

Its subcellular location is the cytoplasm. Its function is as follows. Component of the eukaryotic translation initiation factor 3 (eIF-3) complex, which is involved in protein synthesis of a specialized repertoire of mRNAs and, together with other initiation factors, stimulates binding of mRNA and methionyl-tRNAi to the 40S ribosome. The eIF-3 complex specifically targets and initiates translation of a subset of mRNAs involved in cell proliferation. This chain is Eukaryotic translation initiation factor 3 subunit J, found in Drosophila melanogaster (Fruit fly).